Consider the following 209-residue polypeptide: uncharacterized protein (209 aa).

The signal sequence occupies residues 1–17 (MKRLVTGLLALSLFLAA). Positions 17 to 105 (ACGQDSDQQK…SNNQANNNQK (89 aa)) are disordered. Cys18 is lipidated: N-palmitoyl cysteine. Cys18 carries S-diacylglycerol cysteine lipidation. A compositionally biased stretch (basic and acidic residues) spans 23 to 70 (DQQKDGNKEKDDKAKTEQQDKKTNDSSKDKKDNKDDSKDVNKDNKDNS). Residues 71 to 105 (ANDNQQQSNSNATNNDQNQTNNNQSSNNQANNNQK) show a composition bias toward low complexity.

It localises to the cell membrane. This is an uncharacterized protein from Staphylococcus aureus (strain COL).